The sequence spans 73 residues: Putative defensin-like protein 42 (73 aa).

Cystine bridges form between cysteine 6/cysteine 58, cysteine 18/cysteine 41, cysteine 27/cysteine 50, and cysteine 31/cysteine 52.

It belongs to the DEFL family.

This Arabidopsis thaliana (Mouse-ear cress) protein is Putative defensin-like protein 42.